Consider the following 141-residue polypeptide: Ribonuclease P protein component (141 aa).

It belongs to the RnpA family. Consists of a catalytic RNA component (M1 or rnpB) and a protein subunit.

It catalyses the reaction Endonucleolytic cleavage of RNA, removing 5'-extranucleotides from tRNA precursor.. RNaseP catalyzes the removal of the 5'-leader sequence from pre-tRNA to produce the mature 5'-terminus. It can also cleave other RNA substrates such as 4.5S RNA. The protein component plays an auxiliary but essential role in vivo by binding to the 5'-leader sequence and broadening the substrate specificity of the ribozyme. This chain is Ribonuclease P protein component, found in Onion yellows phytoplasma (strain OY-M).